A 573-amino-acid chain; its full sequence is Multidrug and toxin extrusion protein 2 (573 aa).

The Cytoplasmic segment spans residues 1-46 (MEPAEDSLGATIQPPELVRVPRGRSLRILLGLRGALSPDVRREAAA). A helical membrane pass occupies residues 47–67 (LVALAGPVFLAQLMIFLISIV). Residues 68 to 81 (SSIFCGHLGKVELD) lie on the Extracellular side of the membrane. A helical membrane pass occupies residues 82–102 (AVTLAVSVVNVTGISVGTGLA). Topologically, residues 103–122 (SACDTLMSQSFGGKNLKRVG) are cytoplasmic. The chain crosses the membrane as a helical span at residues 123–143 (VILQRGILILLLCCFPCWAIF). The Extracellular portion of the chain corresponds to 144-161 (LNTERLLLLLRQDPDVAR). A helical transmembrane segment spans residues 162–182 (LAQVYVMICIPALPAAFLFQL). At 183–196 (QTRYLQSQGIIMPQ) the chain is on the cytoplasmic side. Residues 197–217 (VIVGIAANVVNVGMNAFLLYA) traverse the membrane as a helical segment. The Extracellular segment spans residues 218–225 (LDLGVVGS). Residues 226–246 (AWANTTSQFFLSALLFLYVWW) traverse the membrane as a helical segment. The Cytoplasmic portion of the chain corresponds to 247–266 (KRIHIHTWGGWTRECFQEWS). The chain crosses the membrane as a helical span at residues 267-286 (SYTRLAIPSMFMVCIEWWTF). The Extracellular segment spans residues 287 to 304 (EIGTFLAGLVNVTELGAQ). The helical transmembrane segment at 305 to 325 (AVIYELASVAYMVPFGFGVAA) threads the bilayer. The Cytoplasmic portion of the chain corresponds to 326–345 (SVRVGNALGAGNADQARCSC). The helical transmembrane segment at 346–366 (TTVLLCAGVCALLVGILLAAL) threads the bilayer. Residues 367 to 379 (KDVVAYIFTNDKD) lie on the Extracellular side of the membrane. Residues 380-400 (IISLVSQVMPIFAPFHLFDAL) form a helical membrane-spanning segment. Topologically, residues 401 to 415 (AGTCGGVLRGTGKQK) are cytoplasmic. Residues 416–436 (IGAVLNTIGYYGFGFPIGVSL) traverse the membrane as a helical segment. At 437-443 (MFAAKLG) the chain is on the extracellular side. The helical transmembrane segment at 444 to 464 (IIGLWAGLIVCVSFQAFSYLI) threads the bilayer. Residues 465-545 (YILRTNWSRV…VGEVLTGRQL (81 aa)) lie on the Cytoplasmic side of the membrane. A helical transmembrane segment spans residues 546–566 (VFYRGMALTVSVAVLIAGIVV). Topologically, residues 567–573 (RVFNDRG) are extracellular.

Belongs to the multi antimicrobial extrusion (MATE) (TC 2.A.66.1) family. In terms of tissue distribution, expressed in testis; especially in testicular Leydig cells.

It localises to the cell membrane. Its function is as follows. Multidrug efflux pump that functions as a H(+)/organic cation antiporter. May mediate testosterone efflux from the Leydig cells in the testes. In Mus musculus (Mouse), this protein is Multidrug and toxin extrusion protein 2 (Slc47a2).